We begin with the raw amino-acid sequence, 438 residues long: Mitochondrial distribution and morphology protein 12 (438 aa).

One can recognise an SMP-LTD domain in the interval 1-438 (MSIEVDWAAA…VYPSFWTFLV (438 aa)). 3 disordered regions span residues 110-154 (SFSH…TSTL), 185-277 (SDSG…MRER), and 353-379 (GSEQSQGSQNPSDDGRPRSGGDQKDKE). Residues 212–226 (DTTNSTSRPSTANTL) show a composition bias toward polar residues. Residues 227 to 245 (PSHPSLGHSGSSGSNPHTS) are compositionally biased toward low complexity. Positions 354 to 364 (SEQSQGSQNPS) are enriched in polar residues. Residues 365–379 (DDGRPRSGGDQKDKE) show a composition bias toward basic and acidic residues.

This sequence belongs to the MDM12 family. Component of the ER-mitochondria encounter structure (ERMES) or MDM complex, composed of mmm1, mdm10, mdm12 and mdm34. A mmm1 homodimer associates with one molecule of mdm12 on each side in a pairwise head-to-tail manner, and the SMP-LTD domains of mmm1 and mdm12 generate a continuous hydrophobic tunnel for phospholipid trafficking.

The protein resides in the mitochondrion outer membrane. It is found in the endoplasmic reticulum membrane. Component of the ERMES/MDM complex, which serves as a molecular tether to connect the endoplasmic reticulum (ER) and mitochondria. Components of this complex are involved in the control of mitochondrial shape and protein biogenesis, and function in nonvesicular lipid trafficking between the ER and mitochondria. Mdm12 is required for the interaction of the ER-resident membrane protein mmm1 and the outer mitochondrial membrane-resident beta-barrel protein mdm10. The mdm12-mmm1 subcomplex functions in the major beta-barrel assembly pathway that is responsible for biogenesis of all mitochondrial outer membrane beta-barrel proteins, and acts in a late step after the SAM complex. The mdm10-mdm12-mmm1 subcomplex further acts in the TOM40-specific pathway after the action of the mdm12-mmm1 complex. Essential for establishing and maintaining the structure of mitochondria and maintenance of mtDNA nucleoids. This is Mitochondrial distribution and morphology protein 12 from Penicillium rubens (strain ATCC 28089 / DSM 1075 / NRRL 1951 / Wisconsin 54-1255) (Penicillium chrysogenum).